Consider the following 156-residue polypeptide: Deoxyuridine 5'-triphosphate nucleotidohydrolase (156 aa).

Substrate contacts are provided by residues 76 to 78 (RSG), asparagine 89, 93 to 95 (TVD), and lysine 103.

This sequence belongs to the dUTPase family. Mg(2+) serves as cofactor.

The catalysed reaction is dUTP + H2O = dUMP + diphosphate + H(+). Its pathway is pyrimidine metabolism; dUMP biosynthesis; dUMP from dCTP (dUTP route): step 2/2. Its function is as follows. This enzyme is involved in nucleotide metabolism: it produces dUMP, the immediate precursor of thymidine nucleotides and it decreases the intracellular concentration of dUTP so that uracil cannot be incorporated into DNA. The sequence is that of Deoxyuridine 5'-triphosphate nucleotidohydrolase from Rhizobium leguminosarum bv. trifolii (strain WSM2304).